The following is a 183-amino-acid chain: Regulatory protein RecX (183 aa).

Polar residues predominate over residues 1–12; it reads MTSFPHPSTSES. The tract at residues 1 to 26 is disordered; it reads MTSFPHPSTSESGPDPDSEPNREEQA.

Belongs to the RecX family.

The protein localises to the cytoplasm. Functionally, modulates RecA activity. The polypeptide is Regulatory protein RecX (Mycobacterium sp. (strain JLS)).